A 525-amino-acid polypeptide reads, in one-letter code: Phosphoenolpyruvate carboxykinase (ATP) (525 aa).

Substrate contacts are provided by R52, Y186, and K192. ATP contacts are provided by residues K192, H211, and 228–236 (GLSGTGKTT). Mn(2+) is bound by residues K192 and H211. Residue D249 participates in Mn(2+) binding. ATP contacts are provided by residues E277, R314, 433 to 434 (RI), and T439. R314 contributes to the substrate binding site.

This sequence belongs to the phosphoenolpyruvate carboxykinase (ATP) family. Mn(2+) serves as cofactor.

It is found in the cytoplasm. The enzyme catalyses oxaloacetate + ATP = phosphoenolpyruvate + ADP + CO2. Its pathway is carbohydrate biosynthesis; gluconeogenesis. Functionally, involved in the gluconeogenesis. Catalyzes the conversion of oxaloacetate (OAA) to phosphoenolpyruvate (PEP) through direct phosphoryl transfer between the nucleoside triphosphate and OAA. The polypeptide is Phosphoenolpyruvate carboxykinase (ATP) (Fusobacterium nucleatum subsp. nucleatum (strain ATCC 25586 / DSM 15643 / BCRC 10681 / CIP 101130 / JCM 8532 / KCTC 2640 / LMG 13131 / VPI 4355)).